The chain runs to 70 residues: Large ribosomal subunit protein bL31 (70 aa).

Residues Cys16, Cys18, Cys37, and Cys40 each coordinate Zn(2+).

Belongs to the bacterial ribosomal protein bL31 family. Type A subfamily. In terms of assembly, part of the 50S ribosomal subunit. Requires Zn(2+) as cofactor.

In terms of biological role, binds the 23S rRNA. This is Large ribosomal subunit protein bL31 from Proteus mirabilis (strain HI4320).